The chain runs to 946 residues: Protocadherin alpha-10 (946 aa).

A signal peptide spans Met1–Gly30. 6 Cadherin domains span residues Gln31–Phe134, Pro135–Phe243, Asp244–Ile351, Ile352–Phe456, Ala457–Leu566, and Val582–Ala679. Residues Gln31–Asn697 lie on the Extracellular side of the membrane. N-linked (GlcNAc...) asparagine glycosylation is present at Asn258. Residue Asn549 is glycosylated (N-linked (GlcNAc...) asparagine). The chain crosses the membrane as a helical span at residues Val698 to Tyr718. Topologically, residues Thr719 to Gln946 are cytoplasmic. PXXP repeat units lie at residues Pro734–Pro737, Pro774–Pro777, Pro795–Pro798, Pro828–Pro831, Pro869–Pro872, and Pro887–Pro890. Residues Pro734 to Pro890 form a 6 X 4 AA repeats of P-X-X-P region. Disordered stretches follow at residues Ala826 to Pro852 and Phe865 to Gln946. Basic and acidic residues predominate over residues Asp905–Lys919.

The protein localises to the cell membrane. Potential calcium-dependent cell-adhesion protein. May be involved in the establishment and maintenance of specific neuronal connections in the brain. This chain is Protocadherin alpha-10, found in Mus musculus (Mouse).